Consider the following 291-residue polypeptide: Cytochrome c-552 (291 aa).

Residues 1-23 (MKKTLMASAVGAVIAFGTHGAMA) form the signal peptide. Positions 68, 71, 72, 157, 161, and 162 each coordinate heme c.

Post-translationally, binds 2 heme c groups per subunit.

It localises to the periplasm. Its function is as follows. May play a role in nitrite reduction. Shows peroxidase activity on proteolytic modification. The protein is Cytochrome c-552 (nirB) of Stutzerimonas stutzeri (Pseudomonas stutzeri).